The primary structure comprises 188 residues: Elongation factor P (188 aa).

Position 34 is an N6-(3,6-diaminohexanoyl)-5-hydroxylysine (Lys34).

It belongs to the elongation factor P family. Post-translationally, may be beta-lysylated on the epsilon-amino group of Lys-34 by the combined action of EpmA and EpmB, and then hydroxylated on the C5 position of the same residue by EpmC (if this protein is present). Lysylation is critical for the stimulatory effect of EF-P on peptide-bond formation. The lysylation moiety may extend toward the peptidyltransferase center and stabilize the terminal 3-CCA end of the tRNA. Hydroxylation of the C5 position on Lys-34 may allow additional potential stabilizing hydrogen-bond interactions with the P-tRNA.

Its subcellular location is the cytoplasm. It participates in protein biosynthesis; polypeptide chain elongation. Functionally, involved in peptide bond synthesis. Alleviates ribosome stalling that occurs when 3 or more consecutive Pro residues or the sequence PPG is present in a protein, possibly by augmenting the peptidyl transferase activity of the ribosome. Modification of Lys-34 is required for alleviation. The sequence is that of Elongation factor P from Klebsiella pneumoniae (strain 342).